A 264-amino-acid chain; its full sequence is 3-methyl-2-oxobutanoate hydroxymethyltransferase (264 aa).

Residues Asp45 and Asp84 each contribute to the Mg(2+) site. 3-methyl-2-oxobutanoate contacts are provided by residues 45–46, Asp84, and Lys112; that span reads DS. Glu114 is a Mg(2+) binding site. Glu181 acts as the Proton acceptor in catalysis.

It belongs to the PanB family. As to quaternary structure, homodecamer; pentamer of dimers. Mg(2+) serves as cofactor.

Its subcellular location is the cytoplasm. The enzyme catalyses 3-methyl-2-oxobutanoate + (6R)-5,10-methylene-5,6,7,8-tetrahydrofolate + H2O = 2-dehydropantoate + (6S)-5,6,7,8-tetrahydrofolate. Its pathway is cofactor biosynthesis; (R)-pantothenate biosynthesis; (R)-pantoate from 3-methyl-2-oxobutanoate: step 1/2. Catalyzes the reversible reaction in which hydroxymethyl group from 5,10-methylenetetrahydrofolate is transferred onto alpha-ketoisovalerate to form ketopantoate. The chain is 3-methyl-2-oxobutanoate hydroxymethyltransferase from Shigella boydii serotype 18 (strain CDC 3083-94 / BS512).